A 423-amino-acid chain; its full sequence is CinA-like protein (423 aa).

This sequence belongs to the CinA family.

This chain is CinA-like protein, found in Synechococcus sp. (strain CC9311).